The sequence spans 393 residues: MSDQVKITPMTLNFGPQHPAAHGVMRLVLEMGGEVIERIDPHIGLLHRGTEKLIEYKTYLQALPYFDRLDYVSPMAQEHAYSLCVEKLLKCEIPIRAKYLRVIFCELTRILNHLLNISSQALDIGAMTPLLWMFEEREKILGFYERASGARFHSAYIRPGGVAADVPSDLIDDIFKFVSTFSKFMDDIDDLLTENRIWKQRNVDIGVVSKKQALDWGFSGPMLRACGIPWDLRKSQPYEIYEDLEFEIPVGENGDCYDRYLVRMAEIRQSIKLLEQCLDRLPDGPVKTDDRKIAPPKRSEMKESMEALIHHFKLYSEGYSVPVGETYMAVEAPKGEFGVYIVSDGTNKPYRCRIRAPGFAHLQAIDIIAKGHMLADLTAIIGSLDIVFGEIDR.

This sequence belongs to the complex I 49 kDa subunit family. NDH-1 is composed of 14 different subunits. Subunits NuoB, C, D, E, F, and G constitute the peripheral sector of the complex.

It is found in the cell inner membrane. It carries out the reaction a quinone + NADH + 5 H(+)(in) = a quinol + NAD(+) + 4 H(+)(out). In terms of biological role, NDH-1 shuttles electrons from NADH, via FMN and iron-sulfur (Fe-S) centers, to quinones in the respiratory chain. The immediate electron acceptor for the enzyme in this species is believed to be ubiquinone. Couples the redox reaction to proton translocation (for every two electrons transferred, four hydrogen ions are translocated across the cytoplasmic membrane), and thus conserves the redox energy in a proton gradient. In Ehrlichia canis (strain Jake), this protein is NADH-quinone oxidoreductase subunit D.